Here is a 272-residue protein sequence, read N- to C-terminus: uncharacterized protein (272 aa).

Residues 1-20 (MKLRKIFLLPLISLSTLSVA) form the signal peptide. A lipid anchor (N-palmitoyl cysteine) is attached at Cys-21. The S-diacylglycerol cysteine moiety is linked to residue Cys-21.

Belongs to the MG439/MG440 family.

It is found in the cell membrane. This is an uncharacterized protein from Mycoplasma genitalium (strain ATCC 33530 / DSM 19775 / NCTC 10195 / G37) (Mycoplasmoides genitalium).